The chain runs to 576 residues: Glutamine-dependent NAD(+) synthetase (576 aa).

Residues 4–246 (LRVTLAQLNP…EEIITVDLDL (243 aa)) form the CN hydrolase domain. Residue Glu44 is the Proton acceptor; for glutaminase activity of the active site. Lys112 (for glutaminase activity) is an active-site residue. Tyr118 serves as a coordination point for L-glutamine. Cys148 serves as the catalytic Nucleophile; for glutaminase activity. Positions 176 and 182 each coordinate L-glutamine. The tract at residues 292–576 (PVREEEMFRA…PITNRFKEPL (285 aa)) is ligase. 321–328 (GLSGGMDS) is an ATP binding site. Asn404 contacts deamido-NAD(+). Thr428 lines the ATP pocket. 2 residues coordinate deamido-NAD(+): Glu433 and Lys545.

It in the C-terminal section; belongs to the NAD synthetase family.

It catalyses the reaction deamido-NAD(+) + L-glutamine + ATP + H2O = L-glutamate + AMP + diphosphate + NAD(+) + H(+). It participates in cofactor biosynthesis; NAD(+) biosynthesis; NAD(+) from deamido-NAD(+) (L-Gln route): step 1/1. In terms of biological role, catalyzes the ATP-dependent amidation of deamido-NAD to form NAD. Uses L-glutamine as a nitrogen source. This chain is Glutamine-dependent NAD(+) synthetase (nadE2), found in Thermotoga maritima (strain ATCC 43589 / DSM 3109 / JCM 10099 / NBRC 100826 / MSB8).